Consider the following 352-residue polypeptide: Speedy protein E16 (352 aa).

Positions 1-90 (MDRTETRFRK…EPEKELAPEP (90 aa)) are disordered. Over residues 18 to 40 (ITTSRQPHPQNEQSPQRSTSGYS) the composition is skewed to polar residues. The segment covering 76–90 (DESEEEPEKELAPEP) has biased composition (acidic residues).

Belongs to the Speedy/Ringo family.

The chain is Speedy protein E16 from Homo sapiens (Human).